The chain runs to 501 residues: Acyl-CoA-binding domain-containing protein 5A (501 aa).

An ACB domain is found at 9 to 98; that stretch reads YEQRFNAAVK…LKLILESMPV (90 aa). An acyl-CoA contacts are provided by residues 20-29, 40-44, Lys66, and Tyr85; these read IQNLPPNGSF and YSYYK. Residues 173–405 are disordered; sequence IDLEDREDDD…GERWGADGPM (233 aa). Positions 176–195 are enriched in acidic residues; it reads EDREDDDDEDEEGERDEVEE. Residues 219–235 show a composition bias toward polar residues; that stretch reads SNGSISQHKGLSNGTHG. Composition is skewed to basic and acidic residues over residues 236 to 254, 266 to 283, and 328 to 366; these read SKSD…HMNH, NSEK…HVAS, and RSQD…KRSD. Low complexity predominate over residues 376 to 389; the sequence is SRSPASGSGSAGPQ. Positions 406–437 form a coiled coil; the sequence is TENLNEQIICALARLQDDMQSVLQRLHTLEAL. A helical transmembrane segment spans residues 465-485; it reads WWPFDVSLGTVAFAVVWPFVV.

This sequence belongs to the ATG37 family.

The protein resides in the membrane. Functionally, acyl-CoA binding protein which acts as the peroxisome receptor for pexophagy but is dispensable for aggrephagy and nonselective autophagy. Binds medium- and long-chain acyl-CoA esters. The sequence is that of Acyl-CoA-binding domain-containing protein 5A (acbd5a) from Danio rerio (Zebrafish).